We begin with the raw amino-acid sequence, 291 residues long: UDP-N-acetylenolpyruvoylglucosamine reductase (291 aa).

One can recognise an FAD-binding PCMH-type domain in the interval 19 to 186; sequence GIGGPAEWIA…VSARLKLASG (168 aa). Residue Arg165 is part of the active site. The Proton donor role is filled by Ser215. Glu285 is an active-site residue.

It belongs to the MurB family. The cofactor is FAD.

Its subcellular location is the cytoplasm. The enzyme catalyses UDP-N-acetyl-alpha-D-muramate + NADP(+) = UDP-N-acetyl-3-O-(1-carboxyvinyl)-alpha-D-glucosamine + NADPH + H(+). It participates in cell wall biogenesis; peptidoglycan biosynthesis. Functionally, cell wall formation. This chain is UDP-N-acetylenolpyruvoylglucosamine reductase, found in Prochlorococcus marinus (strain NATL2A).